A 252-amino-acid polypeptide reads, in one-letter code: Chitooligosaccharide deacetylase (252 aa).

2 residues coordinate Mg(2+): histidine 61 and histidine 125.

This sequence belongs to the YdjC deacetylase family. ChbG subfamily. Homodimer. It depends on Mg(2+) as a cofactor.

The protein localises to the cytoplasm. The catalysed reaction is N,N'-diacetylchitobiose + H2O = N-acetyl-beta-D-glucosaminyl-(1-&gt;4)-D-glucosamine + acetate. The enzyme catalyses diacetylchitobiose-6'-phosphate + H2O = N'-monoacetylchitobiose-6'-phosphate + acetate. It participates in glycan degradation; chitin degradation. Its function is as follows. Involved in the degradation of chitin. ChbG is essential for growth on the acetylated chitooligosaccharides chitobiose and chitotriose but is dispensable for growth on cellobiose and chitosan dimer, the deacetylated form of chitobiose. Deacetylation of chitobiose-6-P and chitotriose-6-P is necessary for both the activation of the chb promoter by the regulatory protein ChbR and the hydrolysis of phosphorylated beta-glucosides by the phospho-beta-glucosidase ChbF. Catalyzes the removal of only one acetyl group from chitobiose-6-P to yield monoacetylchitobiose-6-P, the inducer of ChbR and the substrate of ChbF. In Citrobacter koseri (strain ATCC BAA-895 / CDC 4225-83 / SGSC4696), this protein is Chitooligosaccharide deacetylase.